Reading from the N-terminus, the 355-residue chain is Peptide chain release factor 1 (355 aa).

Q233 carries the N5-methylglutamine modification.

The protein belongs to the prokaryotic/mitochondrial release factor family. Methylated by PrmC. Methylation increases the termination efficiency of RF1.

It is found in the cytoplasm. Its function is as follows. Peptide chain release factor 1 directs the termination of translation in response to the peptide chain termination codons UAG and UAA. This is Peptide chain release factor 1 from Amoebophilus asiaticus (strain 5a2).